The sequence spans 2136 residues: U5 small nuclear ribonucleoprotein 200 kDa helicase (2136 aa).

Phosphoserine occurs at positions 17 and 26. Residue lysine 46 forms a Glycyl lysine isopeptide (Lys-Gly) (interchain with G-Cter in SUMO2) linkage. Residues 50-80 form a disordered region; that stretch reads TRMGDKAQRTKPQMQEERRAKRRKRDEDRHD. Residues 54–84 adopt a coiled-coil conformation; it reads DKAQRTKPQMQEERRAKRRKRDEDRHDINKM. The residue at position 225 (serine 225) is a Phosphoserine. Threonine 389 carries the phosphothreonine modification. Positions 395–2129 are interaction with C9orf78 and WBP4; that stretch reads DLDQGGEALA…YKFSVDVKEA (1735 aa). The 184-residue stretch at 490 to 673 folds into the Helicase ATP-binding 1 domain; that stretch reads RAALETDENL…FLRVDPAKGL (184 aa). 503-510 serves as a coordination point for ATP; sequence APTGAGKT. The DEIH box signature appears at 615–618; sequence DEIH. One can recognise a Helicase C-terminal 1 domain in the interval 684 to 921; the sequence is PLEQTYVGIT…NAKDAVNWLG (238 aa). The residue at position 709 (tyrosine 709) is a Phosphotyrosine. Lysine 971 is modified (N6-acetyllysine). The SEC63 1 domain occupies 981–1286; the sequence is VTELGRIASH…SCETQLPVSF (306 aa). An interaction with TSSC4 region spans residues 1282–2136; sequence LPVSFRHLIL…KEAETDSDSD (855 aa). The 176-residue stretch at 1337 to 1512 folds into the Helicase ATP-binding 2 domain; sequence NTVYNSDDNV…WLGCSATSTF (176 aa). 1350–1357 is an ATP binding site; that stretch reads APTGSGKT. Threonine 1428 is modified (phosphothreonine). Positions 1454–1457 match the DEVH box motif; it reads DEVH. Positions 1545 to 1753 constitute a Helicase C-terminal 2 domain; it reads PVYHAITKHS…TIENKQDAVD (209 aa). Phosphothreonine is present on threonine 1765. In terms of domain architecture, SEC63 2 spans 1812–2124; that stretch reads PLNLGMIAAY…GCDQEYKFSV (313 aa). The residue at position 2002 (serine 2002) is a Phosphoserine. A Phosphothreonine modification is found at threonine 2131. Residues serine 2133 and serine 2135 each carry the phosphoserine modification.

Belongs to the helicase family. SKI2 subfamily. As to quaternary structure, component of a core complex containing at least PRPF8, SNRNP200, EFTUD2 and SNRNP40. Component of the U5 snRNP and U4/U6-U5 tri-snRNP complexes, building blocks of the spliceosome. Component of the U4/U6-U5 tri-snRNP complex composed of the U4, U6 and U5 snRNAs and at least PRPF3, PRPF4, PRPF6, PRPF8, PRPF31, SNRNP200, TXNL4A, SNRNP40, DDX23, CD2BP2, PPIH, SNU13, EFTUD2, SART1 and USP39. Component of precatalytic, catalytic and postcatalytic spliceosomal complexes. Component of the minor spliceosome, which splices U12-type introns. Interacts with C9orf78; the interaction is direct and mutually exclusive with its interaction with WBP4. Interacts with WBP4; the interaction is mutually exclusive with its interaction with C9orf78. Interacts with PRPF8. Interacts with TSSC4; the interaction is direct, excludes recruitment of C9ORF78 and WBP4 to SNRNP200 and negatively regulates its RNA helicase activity. As to expression, widely expressed.

It localises to the nucleus. It catalyses the reaction ATP + H2O = ADP + phosphate + H(+). Functionally, catalyzes the ATP-dependent unwinding of U4/U6 RNA duplices, an essential step in the assembly of a catalytically active spliceosome. Plays a role in pre-mRNA splicing as a core component of precatalytic, catalytic and postcatalytic spliceosomal complexes. As a component of the minor spliceosome, involved in the splicing of U12-type introns in pre-mRNAs. Involved in spliceosome assembly, activation and disassembly. Mediates changes in the dynamic network of RNA-RNA interactions in the spliceosome. The polypeptide is U5 small nuclear ribonucleoprotein 200 kDa helicase (SNRNP200) (Homo sapiens (Human)).